Consider the following 252-residue polypeptide: Imidazole glycerol phosphate synthase subunit HisF (252 aa).

Residues Asp-11 and Asp-130 contribute to the active site.

The protein belongs to the HisA/HisF family. Heterodimer of HisH and HisF.

Its subcellular location is the cytoplasm. It carries out the reaction 5-[(5-phospho-1-deoxy-D-ribulos-1-ylimino)methylamino]-1-(5-phospho-beta-D-ribosyl)imidazole-4-carboxamide + L-glutamine = D-erythro-1-(imidazol-4-yl)glycerol 3-phosphate + 5-amino-1-(5-phospho-beta-D-ribosyl)imidazole-4-carboxamide + L-glutamate + H(+). It functions in the pathway amino-acid biosynthesis; L-histidine biosynthesis; L-histidine from 5-phospho-alpha-D-ribose 1-diphosphate: step 5/9. IGPS catalyzes the conversion of PRFAR and glutamine to IGP, AICAR and glutamate. The HisF subunit catalyzes the cyclization activity that produces IGP and AICAR from PRFAR using the ammonia provided by the HisH subunit. The sequence is that of Imidazole glycerol phosphate synthase subunit HisF from Bacillus cytotoxicus (strain DSM 22905 / CIP 110041 / 391-98 / NVH 391-98).